The primary structure comprises 269 residues: Formamidopyrimidine-DNA glycosylase (269 aa).

Proline 2 acts as the Schiff-base intermediate with DNA in catalysis. Glutamate 3 acts as the Proton donor in catalysis. Catalysis depends on lysine 57, which acts as the Proton donor; for beta-elimination activity. The DNA site is built by histidine 90, arginine 109, and lysine 150. The FPG-type zinc finger occupies 235 to 269 (QVYGRKGEPCRVCGTPIVATKHAQRATFYCRHCQK). The active-site Proton donor; for delta-elimination activity is the arginine 259.

This sequence belongs to the FPG family. Monomer. Requires Zn(2+) as cofactor.

The enzyme catalyses Hydrolysis of DNA containing ring-opened 7-methylguanine residues, releasing 2,6-diamino-4-hydroxy-5-(N-methyl)formamidopyrimidine.. The catalysed reaction is 2'-deoxyribonucleotide-(2'-deoxyribose 5'-phosphate)-2'-deoxyribonucleotide-DNA = a 3'-end 2'-deoxyribonucleotide-(2,3-dehydro-2,3-deoxyribose 5'-phosphate)-DNA + a 5'-end 5'-phospho-2'-deoxyribonucleoside-DNA + H(+). Involved in base excision repair of DNA damaged by oxidation or by mutagenic agents. Acts as a DNA glycosylase that recognizes and removes damaged bases. Has a preference for oxidized purines, such as 7,8-dihydro-8-oxoguanine (8-oxoG). Has AP (apurinic/apyrimidinic) lyase activity and introduces nicks in the DNA strand. Cleaves the DNA backbone by beta-delta elimination to generate a single-strand break at the site of the removed base with both 3'- and 5'-phosphates. This chain is Formamidopyrimidine-DNA glycosylase, found in Salmonella choleraesuis (strain SC-B67).